Consider the following 90-residue polypeptide: Molybdopterin synthase sulfur carrier subunit (90 aa).

A 1-thioglycine; alternate modification is found at Gly90. Gly90 carries the glycyl adenylate; alternate modification.

The protein belongs to the MoaD family. MOCS2A subfamily. In terms of assembly, heterotetramer; composed of 2 small (Mocs2A) and 2 large (Mocs2B) subunits. C-terminal thiocarboxylation occurs in 2 steps, it is first acyl-adenylated (-COAMP) via the hesA/moeB/thiF part of MOCS3, then thiocarboxylated (-COSH) via the rhodanese domain of MOCS3.

It is found in the cytoplasm. Its pathway is cofactor biosynthesis; molybdopterin biosynthesis. Acts as a sulfur carrier required for molybdopterin biosynthesis. Component of the molybdopterin synthase complex that catalyzes the conversion of precursor Z into molybdopterin by mediating the incorporation of 2 sulfur atoms into precursor Z to generate a dithiolene group. In the complex, serves as sulfur donor by being thiocarboxylated (-COSH) at its C-terminus by MOCS3. After interaction with Mocs2B, the sulfur is then transferred to precursor Z to form molybdopterin. In Drosophila yakuba (Fruit fly), this protein is Molybdopterin synthase sulfur carrier subunit.